Here is a 478-residue protein sequence, read N- to C-terminus: POU domain, class 2, transcription factor 2 (478 aa).

Disordered regions lie at residues 1–82 (MVHS…PPQA), 167–199 (QAVT…EASD), 275–298 (SSLP…GRRR), 357–391 (PCSA…PLSQ), and 409–478 (TLHP…PYQP). Residues 12–37 (RMSKPLEAEKQGLDSPSEHTDTERNG) show a composition bias toward basic and acidic residues. Polar residues predominate over residues 38–60 (PDTNHQNPQNKTSPFSVSPTGPS). Residues 195 to 269 (EEASDLEELE…LLEKWLNDAE (75 aa)) form the POU-specific domain. Residues 275–285 (SSLPSPNQLSR) show a composition bias toward polar residues. The homeobox DNA-binding region spans 297–356 (RRKKRTSIETNVRFALEKSFLANQKPTSEEILLIAEQLHMEKEVIRVWFCNRRQKEKRIN). The leucine-zipper stretch occupies residues 389-410 (LSQASSSLSTTVTTLSSAVGTL). Gly residues predominate over residues 416–425 (AGGGAAGGGA).

This sequence belongs to the POU transcription factor family. Class-2 subfamily. Interacts with NR3C1, AR and PGR. Interacts with POU2AF1; the interaction increases POU2F2 transactivation activity. Predominantly expressed in B-cells.

Its subcellular location is the nucleus. Transactivation activity is enhanced by transcriptional coactivator POU2AF1. Functionally, transcription factor that specifically binds to the octamer motif (5'-ATTTGCAT-3'). Regulates IL6 expression in B cells with POU2AF1. Regulates transcription in a number of tissues in addition to activating immunoglobulin gene expression. Modulates transcription transactivation by NR3C1, AR and PGR. The polypeptide is POU domain, class 2, transcription factor 2 (POU2F2) (Sus scrofa (Pig)).